A 635-amino-acid polypeptide reads, in one-letter code: Extracellular metalloproteinase 9 (635 aa).

The signal sequence occupies residues 1–19; the sequence is MHGLLLAAGLLTLPLRALA. The propeptide occupies 20–246; the sequence is HPGHQSTSIL…IHGVTDYVAD (227 aa). Asn-274 carries N-linked (GlcNAc...) asparagine glycosylation. Residues 279-307 are disordered; it reads TWHSDGNTRYPTTRGNNGIAQDNPSGGTG. A glycan (N-linked (GlcNAc...) asparagine) is linked at Asn-413. His-430 contributes to the Zn(2+) binding site. The active site involves Glu-431. His-434 lines the Zn(2+) pocket. Asn-475 carries an N-linked (GlcNAc...) asparagine glycan.

Belongs to the peptidase M36 family. Requires Zn(2+) as cofactor.

It is found in the secreted. Its function is as follows. Secreted metalloproteinase that allows assimilation of proteinaceous substrates. The sequence is that of Extracellular metalloproteinase 9 (MEP9) from Uncinocarpus reesii (strain UAMH 1704).